Consider the following 275-residue polypeptide: Ribosomal RNA small subunit methyltransferase A (275 aa).

Asn19, Leu21, Gly46, Glu71, Asp94, and Asn117 together coordinate S-adenosyl-L-methionine.

The protein belongs to the class I-like SAM-binding methyltransferase superfamily. rRNA adenine N(6)-methyltransferase family. RsmA subfamily.

It localises to the cytoplasm. The catalysed reaction is adenosine(1518)/adenosine(1519) in 16S rRNA + 4 S-adenosyl-L-methionine = N(6)-dimethyladenosine(1518)/N(6)-dimethyladenosine(1519) in 16S rRNA + 4 S-adenosyl-L-homocysteine + 4 H(+). Its function is as follows. Specifically dimethylates two adjacent adenosines (A1518 and A1519) in the loop of a conserved hairpin near the 3'-end of 16S rRNA in the 30S particle. May play a critical role in biogenesis of 30S subunits. In Burkholderia thailandensis (strain ATCC 700388 / DSM 13276 / CCUG 48851 / CIP 106301 / E264), this protein is Ribosomal RNA small subunit methyltransferase A.